We begin with the raw amino-acid sequence, 287 residues long: MNQPVSASPVVSVGSVTFGQDRPLSIIAGPCQMESRAHALEVAGALKDIAARLNVGLVFKTSFDKANRTSASGARGIGLKQALPVFADIRSSLGLPVLTDVHEAAQCAEVAQVVDVLQIPAFLCRQTDLLLAAAATGKVVNVKKGQFLAPWDMGNVVAKITGGGNRNILVTERGASFGYNTLVSDMRALPILARTTGAPVIFDATHSVQQPGGKGASTGGEREFVPVLARAAVAVGVAGVFIETHPDPDHAPSDGPNMVPLREFEALVRRLMAFDALAKAADPACPE.

This sequence belongs to the KdsA family.

It localises to the cytoplasm. The enzyme catalyses D-arabinose 5-phosphate + phosphoenolpyruvate + H2O = 3-deoxy-alpha-D-manno-2-octulosonate-8-phosphate + phosphate. Its pathway is carbohydrate biosynthesis; 3-deoxy-D-manno-octulosonate biosynthesis; 3-deoxy-D-manno-octulosonate from D-ribulose 5-phosphate: step 2/3. It participates in bacterial outer membrane biogenesis; lipopolysaccharide biosynthesis. The polypeptide is 2-dehydro-3-deoxyphosphooctonate aldolase (Nitrobacter winogradskyi (strain ATCC 25391 / DSM 10237 / CIP 104748 / NCIMB 11846 / Nb-255)).